Here is an 80-residue protein sequence, read N- to C-terminus: Raniseptin-4 (80 aa).

An N-terminal signal peptide occupies residues 1-22; sequence MAFLKKSLFLVLFLGIVSLSIC. The propeptide occupies 23–49; sequence EEEKREGEEEEKQEEENEELSEEELRD.

Belongs to the frog skin active peptide (FSAP) family. Dermaseptin subfamily. As to expression, expressed by the skin glands.

The protein localises to the secreted. Has antibacterial activity. The polypeptide is Raniseptin-4 (Boana raniceps (Chaco tree frog)).